We begin with the raw amino-acid sequence, 176 residues long: Thiol:disulfide interchange protein HelX (176 aa).

The first 19 residues, 1–19 (MAKPLMFLPLLVMAGFVGA), serve as a signal peptide directing secretion. Residues 35 to 172 (ALAGKEAPAV…ITKKIDPLLA (138 aa)) form the Thioredoxin domain. A disulfide bridge links cysteine 75 with cysteine 78.

Belongs to the thioredoxin family. DsbE subfamily.

It localises to the periplasm. Functionally, required for disulfide bond formation in some periplasmic proteins. Also acts as a disulfide oxidoreductase in cytochromes c biogenesis. The cysteines of apocytochromes c must be in the reduced state for covalent linkage between the two moieties to occur. This Rhodobacter capsulatus (strain ATCC BAA-309 / NBRC 16581 / SB1003) protein is Thiol:disulfide interchange protein HelX (helX).